A 410-amino-acid chain; its full sequence is Elongation factor Tu, chloroplastic (410 aa).

Residues 10–214 (KPHVNIGTIG…NVDEYIPTPE (205 aa)) form the tr-type G domain. Positions 19–26 (GHVDHGKT) are G1. 19–26 (GHVDHGKT) is a GTP binding site. Thr-26 provides a ligand contact to Mg(2+). Residues 60-64 (GITIN) form a G2 region. The tract at residues 81–84 (DCPG) is G3. GTP-binding positions include 81–85 (DCPGH) and 136–139 (NKED). The segment at 136 to 139 (NKED) is G4. The G5 stretch occupies residues 174 to 176 (SAL).

Belongs to the TRAFAC class translation factor GTPase superfamily. Classic translation factor GTPase family. EF-Tu/EF-1A subfamily.

It localises to the plastid. The protein localises to the chloroplast stroma. The enzyme catalyses GTP + H2O = GDP + phosphate + H(+). In terms of biological role, GTP hydrolase that promotes the GTP-dependent binding of aminoacyl-tRNA to the A-site of ribosomes during protein biosynthesis. The sequence is that of Elongation factor Tu, chloroplastic (tufA) from Bigelowiella natans (Pedinomonas minutissima).